We begin with the raw amino-acid sequence, 651 residues long: Probable inactive purple acid phosphatase 9 (651 aa).

The signal sequence occupies residues M1–S20. 3 N-linked (GlcNAc...) asparagine glycosylation sites follow: N32, N96, and N202. Fe cation contacts are provided by D305 and Y308. D305 provides a ligand contact to Zn(2+). Residue N338 participates in Zn(2+) binding. Residue N338 participates in substrate binding. 2 N-linked (GlcNAc...) asparagine glycosylation sites follow: N378 and N432. H444 contacts Zn(2+). N-linked (GlcNAc...) asparagine glycosylation is present at N475. Residue H483 participates in Zn(2+) binding. H483–H485 contributes to the substrate binding site. Residue H485 coordinates Fe cation. Residues N495 and N640 are each glycosylated (N-linked (GlcNAc...) asparagine).

This sequence belongs to the metallophosphoesterase superfamily. Purple acid phosphatase family. Homodimer. Fe cation serves as cofactor. The cofactor is Zn(2+). As to expression, expressed in roots, stems, leaves, flowers and siliques.

It localises to the secreted. This chain is Probable inactive purple acid phosphatase 9 (PAP9), found in Arabidopsis thaliana (Mouse-ear cress).